Here is a 367-residue protein sequence, read N- to C-terminus: Ribosomal lysine N-methyltransferase 5 (367 aa).

A disordered region spans residues 55–74; the sequence is EGGRKKKRVRRRNKASSVEE. A compositionally biased stretch (basic residues) spans 58–68; that stretch reads RKKKRVRRRNK. Residues tryptophan 110, 170 to 172, aspartate 192, tryptophan 256, and methionine 288 contribute to the S-adenosyl-L-methionine site; that span reads GAG.

This sequence belongs to the class I-like SAM-binding methyltransferase superfamily. RKM5 family.

Functionally, S-adenosyl-L-methionine-dependent protein-lysine N-methyltransferase that monomethylates 60S ribosomal protein L1 (RPL1A and RPL1B) at 'Lys-46'. The polypeptide is Ribosomal lysine N-methyltransferase 5 (RKM5) (Saccharomyces cerevisiae (strain Lalvin EC1118 / Prise de mousse) (Baker's yeast)).